The sequence spans 289 residues: mRNA-capping enzyme small subunit (289 aa).

As to quaternary structure, heterodimer of a large and a small subunit.

It localises to the virion. The enzyme catalyses a 5'-end (5'-triphosphoguanosine)-ribonucleoside in mRNA + S-adenosyl-L-methionine = a 5'-end (N(7)-methyl 5'-triphosphoguanosine)-ribonucleoside in mRNA + S-adenosyl-L-homocysteine. Functionally, catalyzes the last reaction in the mRNA cap formation pathway. This is mRNA-capping enzyme small subunit from Fowlpox virus (strain NVSL) (FPV).